The chain runs to 181 residues: Endoribonuclease YbeY (181 aa).

Zn(2+)-binding residues include H115, H119, and H125.

The protein belongs to the endoribonuclease YbeY family. The cofactor is Zn(2+).

Its subcellular location is the cytoplasm. Functionally, single strand-specific metallo-endoribonuclease involved in late-stage 70S ribosome quality control and in maturation of the 3' terminus of the 16S rRNA. The sequence is that of Endoribonuclease YbeY from Bifidobacterium animalis subsp. lactis (strain AD011).